The chain runs to 932 residues: DNA mismatch repair protein MutS (932 aa).

615–622 is an ATP binding site; that stretch reads GPNMAGKS.

It belongs to the DNA mismatch repair MutS family.

Its function is as follows. This protein is involved in the repair of mismatches in DNA. It is possible that it carries out the mismatch recognition step. This protein has a weak ATPase activity. This is DNA mismatch repair protein MutS from Clostridium botulinum (strain 657 / Type Ba4).